A 164-amino-acid polypeptide reads, in one-letter code: Putative 4-hydroxy-4-methyl-2-oxoglutarate aldolase (164 aa).

Residues 80-83 (GGNL) and R102 contribute to the substrate site. D103 is an a divalent metal cation binding site.

It belongs to the class II aldolase/RraA-like family. In terms of assembly, homotrimer. The cofactor is a divalent metal cation.

It catalyses the reaction 4-hydroxy-4-methyl-2-oxoglutarate = 2 pyruvate. The enzyme catalyses oxaloacetate + H(+) = pyruvate + CO2. Functionally, catalyzes the aldol cleavage of 4-hydroxy-4-methyl-2-oxoglutarate (HMG) into 2 molecules of pyruvate. Also contains a secondary oxaloacetate (OAA) decarboxylase activity due to the common pyruvate enolate transition state formed following C-C bond cleavage in the retro-aldol and decarboxylation reactions. The protein is Putative 4-hydroxy-4-methyl-2-oxoglutarate aldolase of Paraburkholderia phymatum (strain DSM 17167 / CIP 108236 / LMG 21445 / STM815) (Burkholderia phymatum).